Reading from the N-terminus, the 593-residue chain is Bifunctional lycopene cyclase/phytoene synthase (593 aa).

A lycopene beta-cyclase region spans residues 1–242 (MAYDYALVHL…IVFGMAVFDQ (242 aa)). A run of 7 helical transmembrane segments spans residues 8–28 (VHLK…YPIF), 31–51 (IHFL…LPWD), 77–97 (IEEL…YILL), 117–136 (IARG…LYGV), 147–167 (YLGL…TVAG), 169–189 (FILT…TVYL), and 231–251 (ILIV…FAFP). The tract at residues 249–593 (AFPHLFPKVP…KTVLKALFSA (345 aa)) is phytoene synthase.

It in the N-terminal section; belongs to the lycopene beta-cyclase family. The protein in the C-terminal section; belongs to the phytoene/squalene synthase family.

It localises to the membrane. The catalysed reaction is all-trans-lycopene = gamma-carotene. The enzyme catalyses gamma-carotene = all-trans-beta-carotene. It carries out the reaction 2 (2E,6E,10E)-geranylgeranyl diphosphate = 15-cis-phytoene + 2 diphosphate. Its pathway is carotenoid biosynthesis; beta-carotene biosynthesis. The protein operates within carotenoid biosynthesis; phytoene biosynthesis; all-trans-phytoene from geranylgeranyl diphosphate: step 1/1. Bifunctional enzyme that catalyzes the reactions from geranylgeranyl diphosphate to phytoene (phytoene synthase) and lycopene to beta-carotene via the intermediate gamma-carotene (lycopene cyclase). In Podospora anserina (strain S / ATCC MYA-4624 / DSM 980 / FGSC 10383) (Pleurage anserina), this protein is Bifunctional lycopene cyclase/phytoene synthase.